We begin with the raw amino-acid sequence, 300 residues long: Acetaldehyde dehydrogenase (300 aa).

Serine 10 to isoleucine 13 is an NAD(+) binding site. The active-site Acyl-thioester intermediate is cysteine 129. NAD(+)-binding positions include serine 160–asparagine 168 and asparagine 271.

This sequence belongs to the acetaldehyde dehydrogenase family.

It carries out the reaction acetaldehyde + NAD(+) + CoA = acetyl-CoA + NADH + H(+). The sequence is that of Acetaldehyde dehydrogenase from Alkalilimnicola ehrlichii (strain ATCC BAA-1101 / DSM 17681 / MLHE-1).